A 467-amino-acid polypeptide reads, in one-letter code: ADP-dependent glucose/glucosamine kinase (467 aa).

One can recognise an ADPK domain in the interval 10–467; the sequence is RLWKRLYVNA…FVSEFGMRKR (458 aa). D-glucose is bound by residues aspartate 42, glutamate 96, glycine 120, 120–121, histidine 184, and aspartate 211; that span reads GQ. Glutamate 279 is a Mg(2+) binding site. Asparagine 305 contributes to the ADP binding site. Glutamate 308 lines the Mg(2+) pocket. ADP contacts are provided by residues 352-353, valine 440, and glycine 450; that span reads HT. D-glucose is bound at residue aspartate 451. Residue aspartate 451 coordinates Mg(2+). Catalysis depends on aspartate 451, which acts as the Proton acceptor.

This sequence belongs to the ADP-dependent glucokinase family. As to quaternary structure, monomer. It depends on Mg(2+) as a cofactor.

It is found in the cytoplasm. It carries out the reaction D-glucose + ADP = D-glucose 6-phosphate + AMP + H(+). The catalysed reaction is D-glucosamine + ADP = D-glucosamine 6-phosphate + AMP + H(+). The protein operates within carbohydrate degradation; glycolysis. Catalyzes the ADP-dependent phosphorylation of D-glucose to D-glucose 6-phosphate and glucosamine to glucosamine 6-phosphate. Can also use CDP as the phosphoryl group donor and D-1,5-anhydroglucitol as the phosphoryl group acceptor. The chain is ADP-dependent glucose/glucosamine kinase from Thermococcus litoralis (strain ATCC 51850 / DSM 5473 / JCM 8560 / NS-C).